Here is a 532-residue protein sequence, read N- to C-terminus: Phosphoenolpyruvate carboxykinase (ATP) (532 aa).

Substrate-binding residues include arginine 60, tyrosine 200, and lysine 206. ATP-binding positions include lysine 206, histidine 225, and 242-250 (GLSGTGKTT). Residues lysine 206 and histidine 225 each coordinate Mn(2+). Serine 244 contacts substrate. Aspartate 263 is a binding site for Mn(2+). ATP-binding positions include glutamate 291, arginine 327, 443–444 (RI), and threonine 449. A substrate-binding site is contributed by arginine 327.

The protein belongs to the phosphoenolpyruvate carboxykinase (ATP) family. Monomer. It depends on Mn(2+) as a cofactor.

The protein resides in the cytoplasm. It catalyses the reaction oxaloacetate + ATP = phosphoenolpyruvate + ADP + CO2. It functions in the pathway carbohydrate biosynthesis; gluconeogenesis. With respect to regulation, inhibited by p-chloromercuribenzoate. Functionally, involved in gluconeogenesis. Catalyzes the conversion of oxaloacetate (OAA) to phosphoenolpyruvate (PEP) through direct phosphoryl transfer between the nucleoside triphosphate and OAA. This Anaerobiospirillum succiniciproducens protein is Phosphoenolpyruvate carboxykinase (ATP).